The primary structure comprises 358 residues: Probable tartrate dehydrogenase/decarboxylase TtuC' (358 aa).

Asp-222, Asp-246, and Asp-250 together coordinate Mn(2+).

Belongs to the isocitrate and isopropylmalate dehydrogenases family. Mg(2+) is required as a cofactor. The cofactor is Mn(2+). Requires K(+) as cofactor.

It localises to the cytoplasm. It carries out the reaction tartrate + NAD(+) = 2-hydroxy-3-oxosuccinate + NADH + H(+). The catalysed reaction is (2R,3S)-tartrate + NAD(+) = 2-hydroxy-3-oxosuccinate + NADH + H(+). The enzyme catalyses (2R,3R)-tartrate + NAD(+) = 2-hydroxy-3-oxosuccinate + NADH + H(+). It catalyses the reaction (2R,3R)-tartrate + H(+) = (R)-glycerate + CO2. It carries out the reaction (R)-malate + NAD(+) = pyruvate + CO2 + NADH. The protein operates within carbohydrate acid metabolism; tartrate degradation; 2-hydroxy-3-oxosuccinate from L-tartrate: step 1/1. Its pathway is carbohydrate acid metabolism; tartrate degradation; 2-hydroxy-3-oxosuccinate from meso-tartrate: step 1/1. It participates in carbohydrate acid metabolism; tartrate degradation; D-glycerate from L-tartrate: step 1/1. Its function is as follows. Has multiple catalytic activities. Apart from catalyzing the oxidation of (+)-tartrate to oxaloglycolate, also converts meso-tartrate to D-glycerate and catalyzes the oxidative decarboxylation of D-malate to pyruvate. The protein is Probable tartrate dehydrogenase/decarboxylase TtuC' (ttuC') of Agrobacterium vitis (Rhizobium vitis).